The following is a 259-amino-acid chain: 2,3-dihydroxy-2,3-dihydro-p-cumate dehydrogenase (259 aa).

18 to 42 serves as a coordination point for NAD(+); the sequence is VTGGAHGIGLGIVERLLGLGARVTA. The Proton acceptor role is filled by Tyr-163.

Belongs to the short-chain dehydrogenases/reductases (SDR) family.

It catalyses the reaction (2R,3S)-2,3-dihydroxy-2,3-dihydro-p-cumate + NAD(+) = 2,3-dihydroxy-p-cumate + NADH + H(+). It participates in aromatic compound metabolism; p-cumate degradation; acetaldehyde and pyruvate from p-cumate: step 2/7. The polypeptide is 2,3-dihydroxy-2,3-dihydro-p-cumate dehydrogenase (cmtB) (Pseudomonas putida (strain ATCC 700007 / DSM 6899 / JCM 31910 / BCRC 17059 / LMG 24140 / F1)).